Here is a 419-residue protein sequence, read N- to C-terminus: Transcription termination factor Rho (419 aa).

Residues 48 to 123 (DIFGDGVLEI…LKVNAVNYDK (76 aa)) form the Rho RNA-BD domain. RNA-binding stretches follow at residues 61-66 (GFGFLR), 78-80 (DIY), and 108-110 (ERY). ATP-binding positions include 169–174 (GRGQRG), 181–186 (KAGKTI), and R212. The interval 284–288 (VLTGG) is RNA-binding 2.

Belongs to the Rho family. In terms of assembly, homohexamer. The homohexamer assembles into an open ring structure.

Functionally, facilitates transcription termination by a mechanism that involves Rho binding to the nascent RNA, activation of Rho's RNA-dependent ATPase activity, and release of the mRNA from the DNA template. This chain is Transcription termination factor Rho, found in Buchnera aphidicola subsp. Schizaphis graminum (strain Sg).